Consider the following 61-residue polypeptide: Protein TfaX (61 aa).

The protein belongs to the tfa family.

Might play a role in cell growth during glycolysis. In Escherichia coli (strain K12), this protein is Protein TfaX (tfaX).